The following is a 77-amino-acid chain: U8-lycotoxin-Ls1t (77 aa).

The N-terminal stretch at 1–20 (MKLIIFTGLVLFAIVSLIEA) is a signal peptide. Positions 21 to 26 (QAENEK) are excised as a propeptide.

The protein belongs to the neurotoxin 19 (CSTX) family. 08 (U8-Lctx) subfamily. In terms of processing, contains 4 disulfide bonds. Expressed by the venom gland.

It is found in the secreted. This is U8-lycotoxin-Ls1t from Lycosa singoriensis (Wolf spider).